Consider the following 732-residue polypeptide: 1,4-alpha-glucan branching enzyme GlgB (732 aa).

The active-site Nucleophile is D408. Residue E461 is the Proton donor of the active site.

It belongs to the glycosyl hydrolase 13 family. GlgB subfamily. Monomer.

It catalyses the reaction Transfers a segment of a (1-&gt;4)-alpha-D-glucan chain to a primary hydroxy group in a similar glucan chain.. It functions in the pathway glycan biosynthesis; glycogen biosynthesis. Catalyzes the formation of the alpha-1,6-glucosidic linkages in glycogen by scission of a 1,4-alpha-linked oligosaccharide from growing alpha-1,4-glucan chains and the subsequent attachment of the oligosaccharide to the alpha-1,6 position. The polypeptide is 1,4-alpha-glucan branching enzyme GlgB (Rhodococcus jostii (strain RHA1)).